Consider the following 105-residue polypeptide: ATP-dependent Clp protease adapter protein ClpS (105 aa).

The protein belongs to the ClpS family. As to quaternary structure, binds to the N-terminal domain of the chaperone ClpA.

Its function is as follows. Involved in the modulation of the specificity of the ClpAP-mediated ATP-dependent protein degradation. The protein is ATP-dependent Clp protease adapter protein ClpS of Prochlorococcus marinus (strain MIT 9515).